A 1065-amino-acid polypeptide reads, in one-letter code: MAPAPLGVPEEQLLGCRSRVLSRLLFIAQTALLLLPAAGAGLCPAPCSCRIPLLDCSRRKLPAPSWRALSGLLPPDTAILDFSHNRLSNWNISLESQTLQEVKMNYNELTEIPYFGEPTSNITLLSLVHNIIPEINAQALQFYPALESLDLSSNIISEIKTSSFPRMQLKYLNLSNNRITTLEAGCFDNLSSSLLVVKLNRNRMSMIPPKIFKLPHLQFLELKRNRIKIVEGLTFQGLDSLRSLKMQRNGISKLKDGAFFGLNNMEELELEHNNLTRVNKGWLYGLRMLQQLYVSQNAIERISPDAWEFCQRLSELDLSYNQLTRLDESAFVGLSLLERLNLGDNRVTHIADGVFRFLSNLQTLDLRNNEISWAIEDASEAFAGLTSLTKLILQGNQIKSITKKAFIGLESLEHLDLNNNAIMSIQENAFSQTHLKELILNTSSLLCDCHLKWLLQWLVDNNFQHSVNVSCAHPEWLAGQSILNVDLKDFVCDDFLKPQIRTHPETIIALRGMNVTLTCTAVSSSDSPMSTVWRKDSEILYDVDTENFVRYWQQAGEALEYTSILHLFNVNFTDEGKYQCIVTNHFGSNYSQKAKLTVNEMPSFLKTPMDLTIRTGAMARLECAAEGHPAPQISWQKDGGTDFPAARERRMHVMPEDDVFFIANVKIEDMGIYSCMAQNTAGGLSANASLTVLETPSFIRPLEDKTVTRGETAVLQCIAGGSPAPRLNWTKDDGPLLVTERHFFAAANQLLIIVDAGLEDAGKYTCIMSNTLGTERGHIYLNVISSPNCDSSQSSIGHEDDGWTTVGIVIIVVVCCVVGTSLIWVIVIYHMRRKNEDYSITNTEELNLPADIPSYLSSQGTLSEPQEGYSNSEAGSHQQLMPPANGYIHKGTDGGTGTRVICSDCYDNANIYSRTREYCPYTYIAEEDVLDQTLSSLMVQMPKETYLVHPPQDTTALESLIPSANREPSAFPTNHERISEKKLPSTQMSGETLQRPVWNINRELGLPHPPFSQQPVHESPQLHQNEGLAGREPDCSASSMSCHRLQDHAFDFSRTRNIQDGSEGT.

The first 40 residues, Met-1–Ala-40, serve as a signal peptide directing secretion. One can recognise an LRRNT domain in the interval Gly-41–Pro-75. Residues Gly-41–Gly-807 lie on the Extracellular side of the membrane. LRR repeat units lie at residues Asp-76 to Gln-97, Thr-98 to Thr-119, Asn-121 to Phe-142, Ala-145 to Arg-166, Gln-168 to Asn-189, Ser-193 to Leu-214, His-216 to Gly-237, Ser-240 to Gly-261, Asn-264 to Gly-285, Met-288 to Phe-309, Arg-312 to Gly-333, Leu-336 to Phe-357, Asn-360 to Phe-382, Ser-387 to Gly-408, and Ser-411 to Gln-432. Asn-91 carries N-linked (GlcNAc...) asparagine glycosylation. A glycan (N-linked (GlcNAc...) asparagine) is linked at Asn-121. N-linked (GlcNAc...) asparagine glycans are attached at residues Asn-173 and Asn-189. Asn-274 carries N-linked (GlcNAc...) asparagine glycosylation. N-linked (GlcNAc...) asparagine glycans are attached at residues Asn-441, Asn-468, Asn-514, Asn-571, and Asn-589. The region spanning Ser-443–Asp-494 is the LRRCT domain. Ig-like C2-type domains follow at residues Pro-498–Thr-597, Pro-602–Thr-691, and Pro-696–Ser-785. Cys-519 and Cys-580 are joined by a disulfide. Cys-623 and Cys-675 are joined by a disulfide. Asn-687 and Asn-728 each carry an N-linked (GlcNAc...) asparagine glycan. Cys-717 and Cys-766 are disulfide-bonded. A helical membrane pass occupies residues Ile-808–Ile-828. At Tyr-829–Thr-1065 the chain is on the cytoplasmic side. Tyr-906 carries the post-translational modification Phosphotyrosine. Disordered regions lie at residues Ser-963–Gly-990 and Glu-1003–Met-1040. Positions Asn-974–Leu-983 are enriched in basic and acidic residues. A compositionally biased stretch (polar residues) spans Gln-1013–Gln-1024.

Detected in all tissues analyzed.

It is found in the cell membrane. Its subcellular location is the cytoplasm. This is Leucine-rich repeats and immunoglobulin-like domains protein 2 (LRIG2) from Homo sapiens (Human).